The chain runs to 453 residues: Chromosomal replication initiator protein DnaA (453 aa).

Residues Met-1–Tyr-73 are domain I, interacts with DnaA modulators. The domain II stretch occupies residues Tyr-73–Ile-110. Residues Lys-111–Ile-327 form a domain III, AAA+ region region. The ATP site is built by Gly-155, Gly-157, Lys-158, and Thr-159. The tract at residues Ser-328–Thr-453 is domain IV, binds dsDNA.

Belongs to the DnaA family. In terms of assembly, oligomerizes as a right-handed, spiral filament on DNA at oriC.

It localises to the cytoplasm. In terms of biological role, plays an essential role in the initiation and regulation of chromosomal replication. ATP-DnaA binds to the origin of replication (oriC) to initiate formation of the DNA replication initiation complex once per cell cycle. Binds the DnaA box (a 9 base pair repeat at the origin) and separates the double-stranded (ds)DNA. Forms a right-handed helical filament on oriC DNA; dsDNA binds to the exterior of the filament while single-stranded (ss)DNA is stabiized in the filament's interior. The ATP-DnaA-oriC complex binds and stabilizes one strand of the AT-rich DNA unwinding element (DUE), permitting loading of DNA polymerase. After initiation quickly degrades to an ADP-DnaA complex that is not apt for DNA replication. Binds acidic phospholipids. The protein is Chromosomal replication initiator protein DnaA of Gloeothece citriformis (strain PCC 7424) (Cyanothece sp. (strain PCC 7424)).